A 217-amino-acid chain; its full sequence is uncharacterized protein (217 aa).

The segment at 1–32 (MTLKKHRGKMSEKSNVNKKFTNSTQNNSNWSN) is disordered. The span at 22 to 32 (NSTQNNSNWSN) shows a compositional bias: low complexity.

This is an uncharacterized protein from Acidianus filamentous virus 2 (isolate Italy/Pozzuoli) (AFV-2).